A 290-amino-acid polypeptide reads, in one-letter code: MRIFAVFIFMTYWHLLNAFTVTVPKDLYVVEYGSNMTIECKFPVEKQLDLAALIVYWEMEDKNIIQFVHGEEDLKVQHSSYRQRARLLKDQLSLGNAALQITDVKLQDAGVYRCMISYGGADYKRITVKVNAPYNKINQRILVVDPVTSEHELTCQAEGYPKAEVIWTSSDHQVLSGKTTTTNSKREEKLFNVTSTLRINTTTNEIFYCTFRRLDPEENHTAELVIPELPLAHPPNERTHLVILGAILLCLGVALTFIFRLRKGRMMDVKKCGIQDTNSKKQSDTHLEET.

A signal peptide spans 1–18 (MRIFAVFIFMTYWHLLNA). Residues 19–127 (FTVTVPKDLY…YGGADYKRIT (109 aa)) enclose the Ig-like V-type domain. At 19–238 (FTVTVPKDLY…LPLAHPPNER (220 aa)) the chain is on the extracellular side. An N-linked (GlcNAc...) asparagine glycan is attached at N35. 2 disulfide bridges follow: C40–C114 and C155–C209. The region spanning 133–225 (PYNKINQRIL…PEENHTAELV (93 aa)) is the Ig-like C2-type domain. N-linked (GlcNAc...) asparagine glycosylation is found at N192, N200, and N219. A helical transmembrane segment spans residues 239–259 (THLVILGAILLCLGVALTFIF). At 260–290 (RLRKGRMMDVKKCGIQDTNSKKQSDTHLEET) the chain is on the cytoplasmic side.

This sequence belongs to the immunoglobulin superfamily. BTN/MOG family. As to quaternary structure, interacts with PDCD1. Interacts (via transmembrane domain) with CMTM4 and CMTM6. Interacts with (phosphorylated) STAT3; promoting nuclear translocation. Interacts with CD80. May form homomultimers. Ubiquitinated; STUB1 likely mediates polyubiquitination of PD-L1/CD274 triggering its degradation. Ubiquitinated by MARCHF8; leading to degradation. Deubiquitinated by USP22; leading to stabilization. In terms of tissue distribution, highly expressed in the heart, skeletal muscle, placenta and lung. Weakly expressed in the thymus, spleen, kidney and liver. Expressed on activated T- and B-cells, dendritic cells, keratinocytes and monocytes. Widely expressed, highest in lung, liver and pituitary and in various peripheral blood cells, including neutrophils and some subtypes of lymphoid and myeloid cells.

It is found in the cell membrane. The protein localises to the early endosome membrane. It localises to the recycling endosome membrane. The protein resides in the nucleus. Its subcellular location is the endomembrane system. It is found in the secreted. Functionally, plays a critical role in induction and maintenance of immune tolerance to self. As a ligand for the inhibitory receptor PDCD1/PD-1, modulates the activation threshold of T-cells and limits T-cell effector response. Through a yet unknown activating receptor, may costimulate T-cell subsets that predominantly produce interleukin-10 (IL10). Can also act as a transcription coactivator: in response to hypoxia, translocates into the nucleus via its interaction with phosphorylated STAT3 and promotes transcription of GSDMC, leading to pyroptosis. In terms of biological role, the PDCD1-mediated inhibitory pathway is exploited by tumors to attenuate anti-tumor immunity and escape destruction by the immune system, thereby facilitating tumor survival. The interaction with PDCD1/PD-1 inhibits cytotoxic T lymphocytes (CTLs) effector function. The blockage of the PDCD1-mediated pathway results in the reversal of the exhausted T-cell phenotype and the normalization of the anti-tumor response, providing a rationale for cancer immunotherapy. This is Programmed cell death 1 ligand 1 from Homo sapiens (Human).